We begin with the raw amino-acid sequence, 217 residues long: NADH-quinone oxidoreductase subunit I (217 aa).

The interval 22 to 41 (TTEQYPEEKKETAPRFHGRH) is disordered. 4Fe-4S ferredoxin-type domains lie at 43–73 (LNRH…VEGA) and 89–118 (RVYQ…MSND). Residues Cys-53, Cys-56, Cys-59, Cys-63, Cys-98, Cys-101, Cys-104, and Cys-108 each coordinate [4Fe-4S] cluster. Residues 193-217 (ARRTAGEHSRADEVPAHGAGSERPR) form a disordered region.

The protein belongs to the complex I 23 kDa subunit family. NDH-1 is composed of 14 different subunits. Subunits NuoA, H, J, K, L, M, N constitute the membrane sector of the complex. [4Fe-4S] cluster is required as a cofactor.

The protein resides in the cell membrane. It carries out the reaction a quinone + NADH + 5 H(+)(in) = a quinol + NAD(+) + 4 H(+)(out). Its function is as follows. NDH-1 shuttles electrons from NADH, via FMN and iron-sulfur (Fe-S) centers, to quinones in the respiratory chain. The immediate electron acceptor for the enzyme in this species is believed to be ubiquinone. Couples the redox reaction to proton translocation (for every two electrons transferred, four hydrogen ions are translocated across the cytoplasmic membrane), and thus conserves the redox energy in a proton gradient. The polypeptide is NADH-quinone oxidoreductase subunit I (Frankia casuarinae (strain DSM 45818 / CECT 9043 / HFP020203 / CcI3)).